Consider the following 120-residue polypeptide: Large ribosomal subunit protein uL18 (120 aa).

Belongs to the universal ribosomal protein uL18 family. Part of the 50S ribosomal subunit; part of the 5S rRNA/L5/L18/L25 subcomplex. Contacts the 5S and 23S rRNAs.

This is one of the proteins that bind and probably mediate the attachment of the 5S RNA into the large ribosomal subunit, where it forms part of the central protuberance. The protein is Large ribosomal subunit protein uL18 of Hyphomonas neptunium (strain ATCC 15444).